Here is a 151-residue protein sequence, read N- to C-terminus: Transcriptional repressor NrdR (151 aa).

A disordered region spans residues methionine 1 to serine 24. Residues cysteine 3–cysteine 34 fold into a zinc finger. Positions leucine 14–serine 24 are enriched in basic and acidic residues. Residues leucine 49–valine 139 enclose the ATP-cone domain.

Belongs to the NrdR family. It depends on Zn(2+) as a cofactor.

Its function is as follows. Negatively regulates transcription of bacterial ribonucleotide reductase nrd genes and operons by binding to NrdR-boxes. The chain is Transcriptional repressor NrdR from Shouchella clausii (strain KSM-K16) (Alkalihalobacillus clausii).